Reading from the N-terminus, the 415-residue chain is Glutamyl-tRNA reductase (415 aa).

Substrate-binding positions include 49–52 (TCNR), Ser-104, 109–111 (EPQ), and Gln-115. Residue Cys-50 is the Nucleophile of the active site. 184–189 (GAGEMI) serves as a coordination point for NADP(+).

It belongs to the glutamyl-tRNA reductase family. Homodimer.

It carries out the reaction (S)-4-amino-5-oxopentanoate + tRNA(Glu) + NADP(+) = L-glutamyl-tRNA(Glu) + NADPH + H(+). It functions in the pathway porphyrin-containing compound metabolism; protoporphyrin-IX biosynthesis; 5-aminolevulinate from L-glutamyl-tRNA(Glu): step 1/2. Its function is as follows. Catalyzes the NADPH-dependent reduction of glutamyl-tRNA(Glu) to glutamate 1-semialdehyde (GSA). The chain is Glutamyl-tRNA reductase from Neisseria meningitidis serogroup C (strain 053442).